We begin with the raw amino-acid sequence, 558 residues long: Trehalase 1 (558 aa).

Belongs to the glycosyl hydrolase 15 family.

The enzyme catalyses alpha,alpha-trehalose + H2O = alpha-D-glucose + beta-D-glucose. The protein operates within glycan degradation; trehalose degradation; D-glucose from alpha,alpha-trehalose: step 1/1. In terms of biological role, catalyzes the hydrolysis of alpha,alpha-trehalose into two molecules of D-glucose. The chain is Trehalase 1 (treH1) from Sulfolobus acidocaldarius (strain ATCC 33909 / DSM 639 / JCM 8929 / NBRC 15157 / NCIMB 11770).